Reading from the N-terminus, the 346-residue chain is N-acetyl-gamma-glutamyl-phosphate reductase (346 aa).

Cys-149 is an active-site residue.

Belongs to the NAGSA dehydrogenase family. Type 1 subfamily.

Its subcellular location is the cytoplasm. The enzyme catalyses N-acetyl-L-glutamate 5-semialdehyde + phosphate + NADP(+) = N-acetyl-L-glutamyl 5-phosphate + NADPH + H(+). It participates in amino-acid biosynthesis; L-arginine biosynthesis; N(2)-acetyl-L-ornithine from L-glutamate: step 3/4. In terms of biological role, catalyzes the NADPH-dependent reduction of N-acetyl-5-glutamyl phosphate to yield N-acetyl-L-glutamate 5-semialdehyde. This Geobacter sulfurreducens (strain ATCC 51573 / DSM 12127 / PCA) protein is N-acetyl-gamma-glutamyl-phosphate reductase.